The sequence spans 104 residues: Iron-sulfur cluster assembly protein CyaY (104 aa).

The protein belongs to the frataxin family.

Its function is as follows. Involved in iron-sulfur (Fe-S) cluster assembly. May act as a regulator of Fe-S biogenesis. The chain is Iron-sulfur cluster assembly protein CyaY from Aliivibrio fischeri (strain MJ11) (Vibrio fischeri).